A 171-amino-acid chain; its full sequence is Co-chaperone protein HscB homolog (171 aa).

The 73-residue stretch at 2 to 74 (NHFELFGLPN…VSRAEYILSE (73 aa)) folds into the J domain.

This sequence belongs to the HscB family. Interacts with HscA and stimulates its ATPase activity.

In terms of biological role, co-chaperone involved in the maturation of iron-sulfur cluster-containing proteins. Seems to help targeting proteins to be folded toward HscA. This Aliivibrio fischeri (strain ATCC 700601 / ES114) (Vibrio fischeri) protein is Co-chaperone protein HscB homolog.